Reading from the N-terminus, the 378-residue chain is Pre-B-cell leukemia transcription factor 4 (378 aa).

Over residues 1-15 (MAAPLRPVPPQPAPR) the composition is skewed to pro residues. 2 disordered regions span residues 1-24 (MAAP…APLG) and 100-125 (VSRP…PNDN). In terms of domain architecture, PBC spans 22-214 (PLGHDTSDVL…VMTLRSRFLD (193 aa)). Positions 29-107 (DVLQQIMAIT…EGVSRPEKRG (79 aa)) are PBC-A. The segment covering 109-120 (GAAAGSTATPGG) has biased composition (low complexity). The tract at residues 110–214 (AAAGSTATPG…VMTLRSRFLD (105 aa)) is PBC-B. The segment at residues 215–277 (ARRKRRNFSK…NKRIRYKKNT (63 aa)) is a DNA-binding region (homeobox; TALE-type). 2 disordered regions span residues 291 to 320 (ASTV…PLPL) and 355 to 378 (RAAP…AASN). Residues 356–370 (AAPQPASSPAGESGS) are compositionally biased toward low complexity.

This sequence belongs to the TALE/PBX homeobox family. In terms of tissue distribution, almost exclusively expressed in testis.

The protein localises to the nucleus. This is Pre-B-cell leukemia transcription factor 4 (Pbx4) from Mus musculus (Mouse).